The following is a 320-amino-acid chain: D-alanine--D-alanine ligase (320 aa).

One can recognise an ATP-grasp domain in the interval 101-317 (KMIFQGAGLP…FSELVCKILS (217 aa)). 148 to 203 (INQLGLPLIVKPSREGSSFGMTKVEHLDQLDDALKKAWHYDEEILVEKWHFGTELT) lines the ATP pocket. Mg(2+)-binding residues include aspartate 271, glutamate 284, and asparagine 286.

This sequence belongs to the D-alanine--D-alanine ligase family. Mg(2+) serves as cofactor. Requires Mn(2+) as cofactor.

Its subcellular location is the cytoplasm. It carries out the reaction 2 D-alanine + ATP = D-alanyl-D-alanine + ADP + phosphate + H(+). Its pathway is cell wall biogenesis; peptidoglycan biosynthesis. Functionally, cell wall formation. This chain is D-alanine--D-alanine ligase, found in Hamiltonella defensa subsp. Acyrthosiphon pisum (strain 5AT).